Here is a 353-residue protein sequence, read N- to C-terminus: Heterogeneous nuclear ribonucleoproteins A2/B1 (353 aa).

Met-1 is modified (N-acetylmethionine). At Thr-4 the chain carries Phosphothreonine. Residue Leu-5 forms a Glycyl lysine isopeptide (Lys-Gly) (interchain with G-Cter in SUMO2) linkage. The short motif at 9 to 15 (PLERKKR) is the Nuclear localization signal element. RRM domains lie at 21–104 (RKLF…ESGK) and 112–191 (KKLF…LSRQ). Lys-22 participates in a covalent cross-link: Glycyl lysine isopeptide (Lys-Gly) (interchain with G-Cter in SUMO2). Ser-29 carries the post-translational modification Phosphoserine. Arg-38 is subject to Omega-N-methylarginine. Ser-85 carries the phosphoserine modification. At Lys-104 the chain carries N6,N6-dimethyllysine; alternate. Residue Lys-104 forms a Glycyl lysine isopeptide (Lys-Gly) (interchain with G-Cter in SUMO2); alternate linkage. Glycyl lysine isopeptide (Lys-Gly) (interchain with G-Cter in SUMO2) cross-links involve residues Lys-112, Lys-120, and Lys-137. Thr-140 bears the Phosphothreonine mark. Ser-149 carries the post-translational modification Phosphoserine. Lys-152 is covalently cross-linked (Glycyl lysine isopeptide (Lys-Gly) (interchain with G-Cter in SUMO2)). Position 159 is a phosphothreonine (Thr-159). Glycyl lysine isopeptide (Lys-Gly) (interchain with G-Cter in SUMO2); alternate cross-links involve residues Lys-168 and Lys-173. N6-acetyllysine; alternate is present on residues Lys-168 and Lys-173. Thr-176 bears the Phosphothreonine mark. A Glycyl lysine isopeptide (Lys-Gly) (interchain with G-Cter in SUMO2) cross-link involves residue Lys-186. Phosphoserine occurs at positions 189 and 201. The tract at residues 193 to 353 (MQEVQSSRSG…SGGYGGRSRY (161 aa)) is disordered. The span at 202–223 (GRGGNFGFGDSRGGGGNFGPGP) shows a compositional bias: gly residues. Residue Arg-203 is modified to Asymmetric dimethylarginine; alternate. Arg-203 is subject to Dimethylated arginine; alternate. Arg-203 carries the post-translational modification Omega-N-methylarginine; alternate. Ser-212 carries the post-translational modification Phosphoserine. Arg-213 bears the Asymmetric dimethylarginine; alternate mark. Arg-213 is modified (dimethylated arginine; alternate). Arg-213 is modified (omega-N-methylarginine; alternate). Ser-225 is modified (phosphoserine). An Omega-N-methylarginine modification is found at Arg-228. A phosphoserine mark is found at Ser-231 and Ser-236. Residue Arg-238 is modified to Omega-N-methylarginine. Phosphoserine is present on Ser-259. Arg-266 bears the Asymmetric dimethylarginine; alternate mark. Omega-N-methylarginine; alternate is present on Arg-266. The interval 308-347 (QQPSNYGPMKSGNFGGSRNMGGPYGGGNYGPGGSGGSGGY) is nuclear targeting sequence. Residues 320–353 (NFGGSRNMGGPYGGGNYGPGGSGGSGGYGGRSRY) are compositionally biased toward gly residues. Ser-324 carries the post-translational modification Phosphoserine. Arg-325 is modified (omega-N-methylarginine). Position 331 is a phosphotyrosine (Tyr-331). Phosphoserine occurs at positions 341 and 344. Tyr-347 carries the post-translational modification Phosphotyrosine. Omega-N-methylarginine is present on Arg-350.

In terms of assembly, homodimer; dimerization is required for nucleocytoplasmic translocation. Identified in the spliceosome C complex. Identified in a IGF2BP1-dependent mRNP granule complex containing untranslated mRNAs. Interacts with IGF2BP1. Interacts with C9orf72. Interacts with DGCR8. Interacts with TARDBP. Interacts with CKAP5. Interacts with TBK1. Interacts with STING1. Interacts with SRC. Interacts with PPIA/CYPA. Interacts (via C-terminus) with FAM76B; the interaction results in retention of HNRNPA2B1 in the nucleus and inhibition of the NF-kappa-B-mediated inflammatory pathway. Interacts with NF-kappa-B inhibitors NFKBIA and NFKBIE; the interaction may be mediated by the RRM2 domain of HNRNPA2B1, and HNRNPA2B1 may interact simultaneously with FAM76B and either NFKBIA or NFKBIE to form a complex. In terms of processing, sumoylated in exosomes, promoting miRNAs-binding. Post-translationally, asymmetric dimethylation at Arg-266 constitutes the major methylation site. According to a report, methylation affects subcellular location and promotes nuclear localization. According to another report, methylation at Arg-266 does not influence nucleocytoplasmic shuttling.

The protein localises to the nucleus. Its subcellular location is the nucleoplasm. It localises to the cytoplasm. The protein resides in the cytoplasmic granule. It is found in the secreted. The protein localises to the extracellular exosome. Functionally, heterogeneous nuclear ribonucleoprotein (hnRNP) that associates with nascent pre-mRNAs, packaging them into hnRNP particles. The hnRNP particle arrangement on nascent hnRNA is non-random and sequence-dependent and serves to condense and stabilize the transcripts and minimize tangling and knotting. Packaging plays a role in various processes such as transcription, pre-mRNA processing, RNA nuclear export, subcellular location, mRNA translation and stability of mature mRNAs. Forms hnRNP particles with at least 20 other different hnRNP and heterogeneous nuclear RNA in the nucleus. Involved in transport of specific mRNAs to the cytoplasm in oligodendrocytes and neurons: acts by specifically recognizing and binding the A2RE (21 nucleotide hnRNP A2 response element) or the A2RE11 (derivative 11 nucleotide oligonucleotide) sequence motifs present on some mRNAs, and promotes their transport to the cytoplasm. Specifically binds single-stranded telomeric DNA sequences, protecting telomeric DNA repeat against endonuclease digestion. Also binds other RNA molecules, such as primary miRNA (pri-miRNAs): acts as a nuclear 'reader' of the N6-methyladenosine (m6A) mark by specifically recognizing and binding a subset of nuclear m6A-containing pri-miRNAs. Binding to m6A-containing pri-miRNAs promotes pri-miRNA processing by enhancing binding of DGCR8 to pri-miRNA transcripts. Involved in miRNA sorting into exosomes following sumoylation, possibly by binding (m6A)-containing pre-miRNAs. Acts as a regulator of efficiency of mRNA splicing, possibly by binding to m6A-containing pre-mRNAs. Plays a role in the splicing of pyruvate kinase PKM by binding repressively to sequences flanking PKM exon 9, inhibiting exon 9 inclusion and resulting in exon 10 inclusion and production of the PKM M2 isoform. Also plays a role in the activation of the innate immune response. Mechanistically, senses the presence of viral DNA in the nucleus, homodimerizes and is demethylated by JMJD6. In turn, translocates to the cytoplasm where it activates the TBK1-IRF3 pathway, leading to interferon alpha/beta production. In terms of biological role, (Microbial infection) Involved in the transport of HIV-1 genomic RNA out of the nucleus, to the microtubule organizing center (MTOC), and then from the MTOC to the cytoplasm: acts by specifically recognizing and binding the A2RE (21 nucleotide hnRNP A2 response element) sequence motifs present on HIV-1 genomic RNA, and promotes its transport. The sequence is that of Heterogeneous nuclear ribonucleoproteins A2/B1 (HNRNPA2B1) from Homo sapiens (Human).